Here is a 260-residue protein sequence, read N- to C-terminus: Acyl-[acyl-carrier-protein]--UDP-N-acetylglucosamine O-acyltransferase (260 aa).

It belongs to the transferase hexapeptide repeat family. LpxA subfamily. Homotrimer.

The protein resides in the cytoplasm. It catalyses the reaction a (3R)-hydroxyacyl-[ACP] + UDP-N-acetyl-alpha-D-glucosamine = a UDP-3-O-[(3R)-3-hydroxyacyl]-N-acetyl-alpha-D-glucosamine + holo-[ACP]. It functions in the pathway glycolipid biosynthesis; lipid IV(A) biosynthesis; lipid IV(A) from (3R)-3-hydroxytetradecanoyl-[acyl-carrier-protein] and UDP-N-acetyl-alpha-D-glucosamine: step 1/6. In terms of biological role, involved in the biosynthesis of lipid A, a phosphorylated glycolipid that anchors the lipopolysaccharide to the outer membrane of the cell. This chain is Acyl-[acyl-carrier-protein]--UDP-N-acetylglucosamine O-acyltransferase, found in Aliarcobacter butzleri (strain RM4018) (Arcobacter butzleri).